We begin with the raw amino-acid sequence, 164 residues long: Two-component response regulator ARR16 (164 aa).

Residues 30-160 enclose the Response regulatory domain; sequence HVLAVDDNLI…DVEKLKCHLM (131 aa). Asp-93 is modified (4-aspartylphosphate).

This sequence belongs to the ARR family. Type-A subfamily. Post-translationally, two-component system major event consists of a His-to-Asp phosphorelay between a sensor histidine kinase (HK) and a response regulator (RR). In plants, the His-to-Asp phosphorelay involves an additional intermediate named Histidine-containing phosphotransfer protein (HPt). This multistep phosphorelay consists of a His-Asp-His-Asp sequential transfer of a phosphate group between first a His and an Asp of the HK protein, followed by the transfer to a conserved His of the HPt protein and finally the transfer to an Asp in the receiver domain of the RR protein.

The protein resides in the nucleus. In terms of biological role, functions as a response regulator involved in His-to-Asp phosphorelay signal transduction system. Phosphorylation of the Asp residue in the receiver domain activates the ability of the protein to promote the transcription of target genes. Type-A response regulators seem to act as negative regulators of the cytokinin signaling. The sequence is that of Two-component response regulator ARR16 (ARR16) from Arabidopsis thaliana (Mouse-ear cress).